Here is a 363-residue protein sequence, read N- to C-terminus: Pyrimidine monooxygenase RutA (363 aa).

FMN contacts are provided by residues 49–50 (IK), Asn-115, Glu-124, 140–141 (RY), and Ser-190.

Belongs to the NtaA/SnaA/DszA monooxygenase family. RutA subfamily.

The catalysed reaction is uracil + FMNH2 + NADH + O2 = (Z)-3-ureidoacrylate + FMN + NAD(+) + H2O + H(+). It carries out the reaction thymine + FMNH2 + NADH + O2 = (Z)-2-methylureidoacrylate + FMN + NAD(+) + H2O + H(+). In terms of biological role, catalyzes the pyrimidine ring opening between N-3 and C-4 by an unusual flavin hydroperoxide-catalyzed mechanism, adding oxygen atoms in the process to yield ureidoacrylate peracid, that immediately reacts with FMN forming ureidoacrylate and FMN-N(5)-oxide. The FMN-N(5)-oxide reacts spontaneously with NADH to produce FMN. Requires the flavin reductase RutF to regenerate FMN in vivo. This Escherichia coli O157:H7 (strain EC4115 / EHEC) protein is Pyrimidine monooxygenase RutA.